Here is a 439-residue protein sequence, read N- to C-terminus: Ribosomal protein uS12 methylthiotransferase RimO (439 aa).

In terms of domain architecture, MTTase N-terminal spans lysine 7–asparagine 119. The [4Fe-4S] cluster site is built by cysteine 16, cysteine 50, cysteine 82, cysteine 151, cysteine 155, and cysteine 158. The Radical SAM core domain maps to threonine 137–lysine 368.

This sequence belongs to the methylthiotransferase family. RimO subfamily. [4Fe-4S] cluster serves as cofactor.

The protein localises to the cytoplasm. The catalysed reaction is L-aspartate(89)-[ribosomal protein uS12]-hydrogen + (sulfur carrier)-SH + AH2 + 2 S-adenosyl-L-methionine = 3-methylsulfanyl-L-aspartate(89)-[ribosomal protein uS12]-hydrogen + (sulfur carrier)-H + 5'-deoxyadenosine + L-methionine + A + S-adenosyl-L-homocysteine + 2 H(+). Catalyzes the methylthiolation of an aspartic acid residue of ribosomal protein uS12. The protein is Ribosomal protein uS12 methylthiotransferase RimO of Helicobacter pylori (strain J99 / ATCC 700824) (Campylobacter pylori J99).